Consider the following 827-residue polypeptide: Protein SEY1 (827 aa).

The tract at residues 1–26 (MSQSSPSNAETDEDLSTTSSSSSFVP) is disordered. Residues 1–719 (MSQSSPSNAE…KRSIVQHVTQ (719 aa)) lie on the Cytoplasmic side of the membrane. The GB1/RHD3-type G domain occupies 63–291 (GNNYHIISVF…VKKDLFRPNY (229 aa)). A GTP-binding site is contributed by 73 to 80 (GSQSTGKS). 2 coiled-coil regions span residues 389–409 (KSVY…KFRE) and 472–492 (VSNL…VELK). A helical membrane pass occupies residues 720-740 (IPYYIYLVIMVLGWNEFMAIV). Residues 741 to 743 (RNP) are Lumenal-facing. The chain crosses the membrane as a helical span at residues 744-764 (LFFSLVLVFGAGLYILYSMNL). Topologically, residues 765-827 (LKPAMVVVQR…VVETIEMQDL (63 aa)) are cytoplasmic. Positions 803 to 823 (QKISASNREKVEEEKVVETIE) form a coiled coil.

Belongs to the TRAFAC class dynamin-like GTPase superfamily. GB1/RHD3 GTPase family. RHD3 subfamily.

It localises to the endoplasmic reticulum membrane. In terms of biological role, cooperates with the reticulon proteins and tubule-shaping DP1 family proteins to generate and maintain the structure of the tubular endoplasmic reticulum network. Has GTPase activity, which is required for its function in ER organization. In Scheffersomyces stipitis (strain ATCC 58785 / CBS 6054 / NBRC 10063 / NRRL Y-11545) (Yeast), this protein is Protein SEY1.